Reading from the N-terminus, the 740-residue chain is Alpha-1,6-mannosylglycoprotein 6-beta-N-acetylglucosaminyltransferase A (740 aa).

The Cytoplasmic segment spans residues 1-13 (MAFFSPWKLSSQK). Residues 14 to 30 (LGFFLVTFGFIWGMMLL) traverse the membrane as a helical; Signal-anchor for type II membrane protein segment. Residues 31-740 (HFTIQQRTQP…GQVALCKDCL (710 aa)) are Lumenal-facing. N-linked (GlcNAc...) asparagine glycosylation is found at Asn-109, Asn-114, and Asn-117. 9 cysteine pairs are disulfide-bonded: Cys-144-Cys-182, Cys-155-Cys-195, Cys-171-Cys-337, Cys-371-Cys-625, Cys-648-Cys-723, Cys-652-Cys-725, Cys-659-Cys-712, Cys-680-Cys-701, and Cys-736-Cys-739. The segment at 212–740 (NSLAEIRTDF…GQVALCKDCL (529 aa)) is sufficient for catalytic activity. The N-linked (GlcNAc...) asparagine glycan is linked to Asn-333. 377–378 (DS) is a substrate binding site. 2 N-linked (GlcNAc...) asparagine glycosylation sites follow: Asn-432 and Asn-446. Glu-525 is a binding site for UDP-N-acetyl-alpha-D-glucosamine. A substrate-binding site is contributed by Lys-553.

The protein belongs to the glycosyltransferase 18 family. N-glycosylated. In terms of processing, a secreted form is released from the membrane after cleavage by gamma-secretase. As to expression, detected in cerebellum.

The protein localises to the golgi apparatus membrane. It localises to the perikaryon. Its subcellular location is the secreted. It carries out the reaction N(4)-{beta-D-GlcNAc-(1-&gt;2)-[beta-D-GlcNAc-(1-&gt;4)]-alpha-D-Man-(1-&gt;3)-[beta-D-GlcNAc-(1-&gt;2)-alpha-D-Man-(1-&gt;6)]-beta-D-Man-(1-&gt;4)-beta-D-GlcNAc-(1-&gt;4)-beta-D-GlcNAc}-L-asparaginyl-[protein] + UDP-N-acetyl-alpha-D-glucosamine = N(4)-{beta-D-GlcNAc-(1-&gt;2)-[beta-D-GlcNAc-(1-&gt;4)]-alpha-D-Man-(1-&gt;3)-[beta-D-GlcNAc-(1-&gt;2)-[beta-D-GlcNAc-(1-&gt;6)]-alpha-D-Man-(1-&gt;6)]-beta-D-Man-(1-&gt;4)-beta-D-GlcNAc-(1-&gt;4)-beta-D-GlcNAc}-L-asparaginyl-[protein] + UDP + H(+). It participates in protein modification; protein glycosylation. Its function is as follows. Catalyzes the addition of N-acetylglucosamine (GlcNAc) in beta 1-6 linkage to the alpha-linked mannose of biantennary N-linked oligosaccharides. Catalyzes an important step in the biosynthesis of branched, complex-type N-glycans, such as those found on EGFR, TGFR (TGF-beta receptor) and CDH2. Via its role in the biosynthesis of complex N-glycans, plays an important role in the activation of cellular signaling pathways, reorganization of the actin cytoskeleton, cell-cell adhesion and cell migration. MGAT5-dependent EGFR N-glycosylation enhances the interaction between EGFR and LGALS3 and thereby prevents rapid EGFR endocytosis and prolongs EGFR signaling. Required for efficient interaction between TGFB1 and its receptor. Enhances activation of intracellular signaling pathways by several types of growth factors, including FGF2, PDGF, IGF, TGFB1 and EGF. MGAT5-dependent CDH2 N-glycosylation inhibits CDH2-mediated homotypic cell-cell adhesion and contributes to the regulation of downstream signaling pathways. Promotes cell migration. Contributes to the regulation of the inflammatory response. MGAT5-dependent TCR N-glycosylation enhances the interaction between TCR and LGALS3, limits agonist-induced TCR clustering, and thereby dampens TCR-mediated responses to antigens. Required for normal leukocyte evasation and accumulation at sites of inflammation. Inhibits attachment of monocytes to the vascular endothelium and subsequent monocyte diapedesis. In terms of biological role, promotes proliferation of umbilical vein endothelial cells and angiogenesis, at least in part by promoting the release of the growth factor FGF2 from the extracellular matrix. In Mus musculus (Mouse), this protein is Alpha-1,6-mannosylglycoprotein 6-beta-N-acetylglucosaminyltransferase A (Mgat5).